The primary structure comprises 391 residues: Inhibin beta B chain (391 aa).

The signal sequence occupies residues 1–25 (MDGAARRGVLAALLACGLLLLGAAA). Residues 26–276 (TPTPPPAGSS…ADNKHRIRKR (251 aa)) constitute a propeptide that is removed on maturation. The disordered stretch occupies residues 27 to 47 (PTPPPAGSSPQDTCTSCGFRR). N-linked (GlcNAc...) asparagine glycosylation occurs at Asn-77. Disulfide bonds link Cys-280–Cys-288, Cys-287–Cys-356, Cys-316–Cys-388, and Cys-320–Cys-390.

It belongs to the TGF-beta family. As to quaternary structure, dimeric, linked by one or more disulfide bonds. Inhibin A is a dimer of alpha and beta-A. Inhibin B is a dimer of alpha and beta-B. Activin A is a homodimer of beta-A. Activin B is a homodimer of beta-B. Activin AB is a dimer of beta-A and beta-B.

It is found in the secreted. Inhibins and activins inhibit and activate, respectively, the secretion of follitropin by the pituitary gland. Inhibins/activins are involved in regulating a number of diverse functions such as hypothalamic and pituitary hormone secretion, gonadal hormone secretion, germ cell development and maturation, erythroid differentiation, insulin secretion, nerve cell survival, embryonic axial development or bone growth, depending on their subunit composition. Inhibins appear to oppose the functions of activins. This chain is Inhibin beta B chain (INHBB), found in Gallus gallus (Chicken).